The sequence spans 368 residues: Ribulose bisphosphate carboxylase-like protein 1 (368 aa).

Belongs to the RuBisCO large chain family. Type IV subfamily.

Unknown. Probably does not have RuBisCO activity. The protein is Ribulose bisphosphate carboxylase-like protein 1 (rlp1) of Rhodopseudomonas palustris (strain ATCC BAA-98 / CGA009).